The following is a 209-amino-acid chain: dITP/XTP pyrophosphatase (209 aa).

S7 to K12 lines the substrate pocket. The active-site Proton acceptor is D70. D70 is a Mg(2+) binding site. Substrate-binding positions include S71, F154–D157, K177, and H182–R183.

The protein belongs to the HAM1 NTPase family. As to quaternary structure, homodimer. It depends on Mg(2+) as a cofactor.

It catalyses the reaction XTP + H2O = XMP + diphosphate + H(+). It carries out the reaction dITP + H2O = dIMP + diphosphate + H(+). The enzyme catalyses ITP + H2O = IMP + diphosphate + H(+). Pyrophosphatase that catalyzes the hydrolysis of nucleoside triphosphates to their monophosphate derivatives, with a high preference for the non-canonical purine nucleotides XTP (xanthosine triphosphate), dITP (deoxyinosine triphosphate) and ITP. Seems to function as a house-cleaning enzyme that removes non-canonical purine nucleotides from the nucleotide pool, thus preventing their incorporation into DNA/RNA and avoiding chromosomal lesions. This chain is dITP/XTP pyrophosphatase, found in Chlamydia trachomatis serovar A (strain ATCC VR-571B / DSM 19440 / HAR-13).